The sequence spans 420 residues: Histidine--tRNA ligase (420 aa).

It belongs to the class-II aminoacyl-tRNA synthetase family. As to quaternary structure, homodimer.

The protein localises to the cytoplasm. It carries out the reaction tRNA(His) + L-histidine + ATP = L-histidyl-tRNA(His) + AMP + diphosphate + H(+). The protein is Histidine--tRNA ligase (hisS) of Thermotoga maritima (strain ATCC 43589 / DSM 3109 / JCM 10099 / NBRC 100826 / MSB8).